We begin with the raw amino-acid sequence, 727 residues long: AN1-type zinc finger protein 4 (727 aa).

One can recognise a Ubiquitin-like domain in the interval 28-103 (MELFIETLTG…LKLVLAMRGG (76 aa)). Disordered regions lie at residues 187-217 (HRMS…IIEN) and 238-264 (KKPK…TAPS). Over residues 238 to 248 (KKPKKAVKIKP) the composition is skewed to basic residues. The AN1-type zinc finger occupies 661–708 (KKTTNHCFLCGKKTGLASSYECRCGNNFCASHRYAETHGCTYDYKSAG). Residues Cys-667, Cys-670, Cys-682, Cys-684, Cys-689, His-692, His-698, and Cys-700 each coordinate Zn(2+).

This chain is AN1-type zinc finger protein 4 (ZFAND4), found in Homo sapiens (Human).